Consider the following 385-residue polypeptide: Fe-S cluster assembly protein DRE2 (385 aa).

The segment at 1 to 177 is N-terminal SAM-like domain; sequence MTSSINILLL…KKLNKNDMTI (177 aa). Residues 178-240 are linker; sequence NVPQEIDNIT…NDLLKYNNHN (63 aa). Residues 200 to 226 are disordered; it reads YFSSDDENSSDGSLSDNANEEEEDDDE. Acidic residues predominate over residues 217-226; sequence ANEEEEDDDE. C261, C275, C278, and C280 together coordinate [2Fe-2S] cluster. A fe-S binding site A region spans residues 261 to 280; that stretch reads CELSLNGGKKRKKACKDCTC. C348, C351, C359, and C362 together coordinate [4Fe-4S] cluster. Short sequence motifs (cx2C motif) lie at residues 348–351 and 359–362; these read CGSC and CDGC. Positions 348–362 are fe-S binding site B; sequence CGSCALGDAFRCDGC.

The protein belongs to the anamorsin family. In terms of assembly, monomer. Interacts with TAH18. Interacts with MIA40. Requires [2Fe-2S] cluster as cofactor. It depends on [4Fe-4S] cluster as a cofactor.

The protein localises to the cytoplasm. The protein resides in the mitochondrion intermembrane space. Functionally, component of the cytosolic iron-sulfur (Fe-S) protein assembly (CIA) machinery required for the maturation of extramitochondrial Fe-S proteins. Part of an electron transfer chain functioning in an early step of cytosolic Fe-S biogenesis, facilitating the de novo assembly of a [4Fe-4S] cluster on the scaffold complex CFD1-NBP35. Electrons are transferred to DRE2 from NADPH via the FAD- and FMN-containing protein TAH18. TAH18-DRE2 are also required for the assembly of the diferric tyrosyl radical cofactor of ribonucleotide reductase (RNR), probably by providing electrons for reduction during radical cofactor maturation in the catalytic small subunit RNR2. This chain is Fe-S cluster assembly protein DRE2, found in Candida dubliniensis (strain CD36 / ATCC MYA-646 / CBS 7987 / NCPF 3949 / NRRL Y-17841) (Yeast).